The sequence spans 445 residues: Sporulation protein YkvU (445 aa).

Helical transmembrane passes span 7 to 29 (GIIL…NMIL), 39 to 61 (GLYM…ELPI), 82 to 104 (AFRM…LPFI), 109 to 131 (TYHP…TSIA), 144 to 166 (IAIA…FQWY), 172 to 194 (MAVL…YLYS), 237 to 259 (VNAI…GTAA), 269 to 291 (VAVT…MIPS), 312 to 334 (IFIT…GPLT), 349 to 371 (LLWP…IGMG), 376 to 395 (AFYH…YVLG), and 400 to 422 (LQML…LHYA).

It is found in the forespore membrane. In Bacillus subtilis (strain 168), this protein is Sporulation protein YkvU (ykvU).